The primary structure comprises 302 residues: Bifunctional protein FolD (302 aa).

Residues 165-167, S190, and I231 contribute to the NADP(+) site; that span reads GRS.

This sequence belongs to the tetrahydrofolate dehydrogenase/cyclohydrolase family. As to quaternary structure, homodimer.

The enzyme catalyses (6R)-5,10-methylene-5,6,7,8-tetrahydrofolate + NADP(+) = (6R)-5,10-methenyltetrahydrofolate + NADPH. It catalyses the reaction (6R)-5,10-methenyltetrahydrofolate + H2O = (6R)-10-formyltetrahydrofolate + H(+). It functions in the pathway one-carbon metabolism; tetrahydrofolate interconversion. Functionally, catalyzes the oxidation of 5,10-methylenetetrahydrofolate to 5,10-methenyltetrahydrofolate and then the hydrolysis of 5,10-methenyltetrahydrofolate to 10-formyltetrahydrofolate. The chain is Bifunctional protein FolD from Prochlorococcus marinus (strain SARG / CCMP1375 / SS120).